Here is a 517-residue protein sequence, read N- to C-terminus: Crotonobetaine/carnitine--CoA ligase (517 aa).

Belongs to the ATP-dependent AMP-binding enzyme family.

The catalysed reaction is 4-(trimethylamino)butanoate + ATP + CoA = 4-(trimethylamino)butanoyl-CoA + AMP + diphosphate. It carries out the reaction crotonobetaine + ATP + CoA = crotonobetainyl-CoA + AMP + diphosphate. The enzyme catalyses (R)-carnitine + ATP + CoA = (R)-carnitinyl-CoA + AMP + diphosphate. The protein operates within amine and polyamine metabolism; carnitine metabolism. Its function is as follows. Catalyzes the transfer of CoA to carnitine, generating the initial carnitinyl-CoA needed for the CaiB reaction cycle. Also has activity toward crotonobetaine and gamma-butyrobetaine. The chain is Crotonobetaine/carnitine--CoA ligase from Escherichia coli O139:H28 (strain E24377A / ETEC).